Reading from the N-terminus, the 187-residue chain is UPF0301 protein Ppha_2142 (187 aa).

This sequence belongs to the UPF0301 (AlgH) family.

The protein is UPF0301 protein Ppha_2142 of Pelodictyon phaeoclathratiforme (strain DSM 5477 / BU-1).